Here is a 342-residue protein sequence, read N- to C-terminus: Phosphate acyltransferase (342 aa).

It belongs to the PlsX family. Homodimer. Probably interacts with PlsY.

The protein resides in the cytoplasm. It catalyses the reaction a fatty acyl-[ACP] + phosphate = an acyl phosphate + holo-[ACP]. Its pathway is lipid metabolism; phospholipid metabolism. Functionally, catalyzes the reversible formation of acyl-phosphate (acyl-PO(4)) from acyl-[acyl-carrier-protein] (acyl-ACP). This enzyme utilizes acyl-ACP as fatty acyl donor, but not acyl-CoA. This chain is Phosphate acyltransferase, found in Trichormus variabilis (strain ATCC 29413 / PCC 7937) (Anabaena variabilis).